We begin with the raw amino-acid sequence, 360 residues long: MKRDIQELLNPALRDLKAYNVEGGQQAGIKLNQNESPFDLPLWLKEEVLEAFEKEPWNRYPDILPFRGMRSYASFVGVPADAVMMSNGSNEMLYTIFLACLGPGKKILIPEPSFSLYEKIARLLHTEVVFVPMLPGLAFDADAIIRKAGEERVDFIVLSTPNNPTGMSLASEEVCRIAEAADALVLVDEAYIEFSRQKSVVAEIARLKNLIVLRTMSKALALAGMRIGFAIADPALMAEIAKPKIPFASSRLSEITLQRVLANYYLVTDAVSYILHERERLSTELKGIGGVELYESDTNFIIIRVRHAHELFCELSRRDILVRDVSGYPLMENCLRFNIGLRDENDALLQQLRLLCDEPV.

At Lys-218 the chain carries N6-(pyridoxal phosphate)lysine.

The protein belongs to the class-II pyridoxal-phosphate-dependent aminotransferase family. Histidinol-phosphate aminotransferase subfamily. In terms of assembly, homodimer. Pyridoxal 5'-phosphate is required as a cofactor.

It carries out the reaction L-histidinol phosphate + 2-oxoglutarate = 3-(imidazol-4-yl)-2-oxopropyl phosphate + L-glutamate. It functions in the pathway amino-acid biosynthesis; L-histidine biosynthesis; L-histidine from 5-phospho-alpha-D-ribose 1-diphosphate: step 7/9. The sequence is that of Histidinol-phosphate aminotransferase from Chlorobium phaeobacteroides (strain DSM 266 / SMG 266 / 2430).